The primary structure comprises 336 residues: Di/tripeptide transport system permease protein DppB (336 aa).

Helical transmembrane passes span 10–30 (GLLI…IRLI), 102–122 (LSLA…VIAA), 145–165 (IFWW…WTPV), 198–218 (AVRH…AVIA), 257–277 (LIPV…GAVL), and 307–327 (ILLV…LYGL). The ABC transmembrane type-1 domain maps to 96 to 325 (FPATLELSLA…LVNFVVDILY (230 aa)).

This sequence belongs to the binding-protein-dependent transport system permease family. OppBC subfamily. The complex is composed of two ATP-binding proteins (DppD and DppF), two transmembrane proteins (DppB and DppC) and a solute-binding protein (DppA1-A5). Five orthologous SBPs (DppA1-A5) are present in P.aeruginosa, which increases the substrate specificity of the DppBCDF transporter.

It localises to the cell inner membrane. Part of the ABC transporter DppABCDF involved in the uptake of various di/tripeptides. Is also involved in the uptake of phaseolotoxin, a toxic tripeptide inhibiting the enzyme ornithine carbamoyltransferase. Responsible for the translocation of the substrate across the membrane. This is Di/tripeptide transport system permease protein DppB from Pseudomonas aeruginosa (strain UCBPP-PA14).